The sequence spans 171 residues: 3-hydroxydecanoyl-[acyl-carrier-protein] dehydratase (171 aa).

Residue histidine 70 is part of the active site.

It belongs to the thioester dehydratase family. FabA subfamily. As to quaternary structure, homodimer.

It localises to the cytoplasm. It catalyses the reaction a (3R)-hydroxyacyl-[ACP] = a (2E)-enoyl-[ACP] + H2O. The catalysed reaction is (3R)-hydroxydecanoyl-[ACP] = (2E)-decenoyl-[ACP] + H2O. It carries out the reaction (2E)-decenoyl-[ACP] = (3Z)-decenoyl-[ACP]. Its pathway is lipid metabolism; fatty acid biosynthesis. Its function is as follows. Necessary for the introduction of cis unsaturation into fatty acids. Catalyzes the dehydration of (3R)-3-hydroxydecanoyl-ACP to E-(2)-decenoyl-ACP and then its isomerization to Z-(3)-decenoyl-ACP. Can catalyze the dehydratase reaction for beta-hydroxyacyl-ACPs with saturated chain lengths up to 16:0, being most active on intermediate chain length. The chain is 3-hydroxydecanoyl-[acyl-carrier-protein] dehydratase from Histophilus somni (strain 129Pt) (Haemophilus somnus).